We begin with the raw amino-acid sequence, 310 residues long: tRNA dimethylallyltransferase (310 aa).

14 to 21 provides a ligand contact to ATP; that stretch reads GPTASGKS. 16-21 contributes to the substrate binding site; the sequence is TASGKS. Interaction with substrate tRNA regions lie at residues 39–42 and 163–167; these read DSMQ and QRIVR.

It belongs to the IPP transferase family. In terms of assembly, monomer. Requires Mg(2+) as cofactor.

The catalysed reaction is adenosine(37) in tRNA + dimethylallyl diphosphate = N(6)-dimethylallyladenosine(37) in tRNA + diphosphate. Its function is as follows. Catalyzes the transfer of a dimethylallyl group onto the adenine at position 37 in tRNAs that read codons beginning with uridine, leading to the formation of N6-(dimethylallyl)adenosine (i(6)A). The chain is tRNA dimethylallyltransferase from Brucella melitensis biotype 2 (strain ATCC 23457).